The sequence spans 343 residues: T-cell immunoglobulin and mucin domain-containing protein 4 (343 aa).

Positions Met1–Ala22 are cleaved as a signal peptide. The Ig-like V-type domain maps to Ala23–Arg128. Topologically, residues Ala23–Thr279 are extracellular. Intrachain disulfides connect Cys40/Cys112, Cys53/Cys64, and Cys59/Cys111. Asn220 is a glycosylation site (N-linked (GlcNAc...) asparagine). The disordered stretch occupies residues Thr239–Thr258. The span at Ser248–Thr258 shows a compositional bias: low complexity. A helical transmembrane segment spans residues Ile280–Leu300. Residues Leu301 to Leu343 are Cytoplasmic-facing. Residues Arg313–Leu343 form a disordered region. Phosphoserine occurs at positions 323, 325, and 331.

Belongs to the immunoglobulin superfamily. TIM family. In terms of assembly, homodimer. As to expression, predominantly expressed in lymphoid tissues, such as spleen, lymph nodes, and Peyer patches. Also expressed in fetal liver, salivary gland, and spleen stromal cells, predominantly in the marginal zone and to a lesser extent throughout the white pulp. Not expressed in bone marrow-derived cells. Expressed mainly by antigen presenting cells (APCs) in T- and B-cell areas, but not by T- or B-lymphocytes.

Its subcellular location is the membrane. In terms of biological role, phosphatidylserine receptor that plays different role in immune response including phagocytosis of apoptotic cells and T-cell regulation. Controls T-cell activation in a bimodal fashion, decreasing the activation of naive T-cells by inducing cell cycle arrest, while increasing proliferation of activated T-cells by activating AKT1 and ERK1/2 phosphorylations and subsequent signaling pathways. Also plays a role in efferocytosis which is the process by which apoptotic cells are removed by phagocytic cells. Mechanistically, promotes the engulfment of apoptotic cells or exogenous particles by securing them to phagocytes through direct binding to phosphatidylserine present on apoptotic cells, while other engulfment receptors such as MERTK efficiently recognize apoptotic cells and mediate their ingestion. Additionally, promotes autophagy process by suppressing NLRP3 inflammasome activity via activation of STK11/PRKAA1 pathway in a phosphatidylserine-dependent mechanism. The protein is T-cell immunoglobulin and mucin domain-containing protein 4 (Timd4) of Mus musculus (Mouse).